The following is a 90-amino-acid chain: U7-theraphotoxin-Hhn1a 4 (90 aa).

The N-terminal stretch at 1-19 is a signal peptide; sequence MKTAIFTVVLALAVFAVLS. Residues 20 to 50 constitute a propeptide that is removed on maturation; sequence FGWEANEEALSEEFTELIHEKEAASETEARE. Disulfide bonds link C51/C65, C58/C70, and C64/C81.

It belongs to the neurotoxin 10 (Hwtx-1) family. 13 (Hntx-13) subfamily. In terms of tissue distribution, expressed by the venom gland.

The protein resides in the secreted. Functionally, ion channel inhibitor. This Cyriopagopus hainanus (Chinese bird spider) protein is U7-theraphotoxin-Hhn1a 4.